Consider the following 426-residue polypeptide: MSRSKRDSNFSVFEIGDSTFTVLKRYQNLKPIGSGAQGIVCAAFDAVLERHVAIKKLSRPFQNQTHAKRAYRELVLMKCVNHKNIIGLLNVFTPQKSLEEFQDLYIVMELMDANLCQVIQMELDHERMSYLLYQMLCGIKHLHSAGIIHRDLKPSNIVVKSDCTLKILDFGLARTAGTSFMMTPYVVTRYYRAPEVILGMGYKENVDIWSVGCILGEMIKGGVLFPGTDHIDQWNKVIEQLGTPCTEFMKKLQPTVRTYVENRPKYAGYSFEKLFPDVLFPADSEHNKLKASQARDLLSKMLVIDASKRISVDDALQHPYINVWYDPLEAEAPPPKIPDKQLDEREHTIEEWKELIYKEVLDWEERAKNGVIRGQPAPLGAAVTDGSQAHTSSSSGDASSMSTDPTLPSDTDSSLETSAGTLGCCR.

The Protein kinase domain occupies 26-321 (YQNLKPIGSG…VDDALQHPYI (296 aa)). ATP is bound by residues 33 to 38 (GSGAQG) and Lys-55. The active-site Proton acceptor is Asp-151. Thr-183 is subject to Phosphothreonine. A TXY motif is present at residues 183 to 185 (TPY). Tyr-185 carries the phosphotyrosine modification. The tract at residues 375–426 (QPAPLGAAVTDGSQAHTSSSSGDASSMSTDPTLPSDTDSSLETSAGTLGCCR) is disordered. Over residues 384 to 404 (TDGSQAHTSSSSGDASSMSTD) the composition is skewed to low complexity. Residues 405–420 (PTLPSDTDSSLETSAG) show a composition bias toward polar residues.

This sequence belongs to the protein kinase superfamily. CMGC Ser/Thr protein kinase family. MAP kinase subfamily. Mg(2+) serves as cofactor. In terms of processing, dually phosphorylated on Thr-183 and Tyr-185, which activates the enzyme. Strongly expressed in presumptive ectoderm and mesoderm regions and weakly expressed in endoderm regions during early stages of embryo development. Expressed in the head and dorsal regions during neurula and tailbud stages.

Its subcellular location is the cytoplasm. It is found in the nucleus. The protein localises to the synapse. It carries out the reaction L-seryl-[protein] + ATP = O-phospho-L-seryl-[protein] + ADP + H(+). It catalyses the reaction L-threonyl-[protein] + ATP = O-phospho-L-threonyl-[protein] + ADP + H(+). With respect to regulation, activated by threonine and tyrosine phosphorylation, potentially by the dual-specificity kinase, MKK7. Indirectly activated by Wnt5a. Functionally, responds to activation by environmental stress and pro-inflammatory cytokines by phosphorylating a number of transcription factors, and thus regulating transcriptional activity. Regulates morphogenic cell movements, controlling convergent extension during gastrulation. May play a role in the regulation of the circadian clock. This chain is Mitogen-activated protein kinase 8 (mapk8), found in Xenopus laevis (African clawed frog).